A 321-amino-acid chain; its full sequence is tRNA dimethylallyltransferase (321 aa).

25 to 32 contributes to the ATP binding site; sequence GPTASGKS. Residue 27 to 32 participates in substrate binding; that stretch reads TASGKS. An interaction with substrate tRNA region spans residues 50–53; sequence DSMQ.

The protein belongs to the IPP transferase family. Monomer. Mg(2+) serves as cofactor.

It carries out the reaction adenosine(37) in tRNA + dimethylallyl diphosphate = N(6)-dimethylallyladenosine(37) in tRNA + diphosphate. In terms of biological role, catalyzes the transfer of a dimethylallyl group onto the adenine at position 37 in tRNAs that read codons beginning with uridine, leading to the formation of N6-(dimethylallyl)adenosine (i(6)A). In Rhodopseudomonas palustris (strain ATCC BAA-98 / CGA009), this protein is tRNA dimethylallyltransferase.